The following is a 163-amino-acid chain: Low molecular weight protein-tyrosine phosphatase A (163 aa).

The active-site Nucleophile is Cys-11. Arg-17 is an active-site residue. The active-site Proton donor is the Asp-126.

It belongs to the low molecular weight phosphotyrosine protein phosphatase family.

The catalysed reaction is O-phospho-L-tyrosyl-[protein] + H2O = L-tyrosyl-[protein] + phosphate. Its function is as follows. Key virulence factor required for mycobacterial survival within host macrophages. Exhibits protein tyrosine phosphatase activity. In terms of biological role, supports mycobacteria survival during infection by modulation of the phagosome maturation and modulation of the normal host signaling pathways, including host innate immune responses and cell apoptosis. This Mycobacterium bovis (strain ATCC BAA-935 / AF2122/97) protein is Low molecular weight protein-tyrosine phosphatase A (ptpA).